An 833-amino-acid chain; its full sequence is Leucine--tRNA ligase (833 aa).

The 'HIGH' region motif lies at proline 41 to histidine 52. The 'KMSKS' region motif lies at lysine 610–serine 614. Lysine 613 contributes to the ATP binding site.

This sequence belongs to the class-I aminoacyl-tRNA synthetase family.

It is found in the cytoplasm. It catalyses the reaction tRNA(Leu) + L-leucine + ATP = L-leucyl-tRNA(Leu) + AMP + diphosphate. The protein is Leucine--tRNA ligase of Streptococcus mutans serotype c (strain ATCC 700610 / UA159).